The following is a 338-amino-acid chain: Solute carrier family 35 member G5 (338 aa).

The disordered stretch occupies residues 1 to 27 (MAGSHPYFNLPDSTHPSPPSAPPSLRW). The next 9 helical transmembrane spans lie at 37 to 57 (TNGLLVALLGGGLPAGFVGPL), 67 to 87 (LPSLELLICRCLFHLPIALLL), 102 to 122 (GWACFCALLNVLSIGCAYSAV), 160 to 180 (CGLLGSILGLIIILGPGLWTL), 190 to 210 (TLGYVQAFLGGLALSLGLLVY), 221 to 241 (TVAFLSGLVGLLGCVPGLFVL), 250 to 270 (LLSWSCVGAEGILALVSFTCV), 281 to 301 (LVCAVLHSEVVVALILQYYML), and 305 to 325 (VALSDIMGAGVVLGSIAIITA). The 126-residue stretch at 49-174 (LPAGFVGPLS…SILGLIIILG (126 aa)) folds into the EamA 1 domain. The EamA 2 domain maps to 272 to 325 (YAVTKAHPALVCAVLHSEVVVALILQYYMLHETVALSDIMGAGVVLGSIAIITA).

It belongs to the SLC35G solute transporter family. In terms of tissue distribution, expressed in placenta and testis.

Its subcellular location is the membrane. This is Solute carrier family 35 member G5 (SLC35G5) from Homo sapiens (Human).